The chain runs to 452 residues: Bifunctional protein GlmU (452 aa).

The tract at residues 1-225 (MEVVILAAGQ…VSETLGVNSK (225 aa)) is pyrophosphorylase. UDP-N-acetyl-alpha-D-glucosamine contacts are provided by residues 6 to 9 (LAAG), lysine 20, glutamine 71, 76 to 77 (GT), 98 to 100 (YGD), glycine 135, glutamate 150, asparagine 165, and asparagine 223. Mg(2+) is bound at residue aspartate 100. Residue asparagine 223 participates in Mg(2+) binding. Residues 226–246 (PQLAELERIHQRNIAQRLMED) are linker. The interval 247–452 (GVTLIDPARI…AGWKRPVKQR (206 aa)) is N-acetyltransferase. Residues arginine 329 and lysine 347 each contribute to the UDP-N-acetyl-alpha-D-glucosamine site. Residue histidine 359 is the Proton acceptor of the active site. 2 residues coordinate UDP-N-acetyl-alpha-D-glucosamine: tyrosine 362 and asparagine 373. Acetyl-CoA contacts are provided by residues alanine 376, 382 to 383 (NY), serine 401, alanine 419, and arginine 436.

It in the N-terminal section; belongs to the N-acetylglucosamine-1-phosphate uridyltransferase family. In the C-terminal section; belongs to the transferase hexapeptide repeat family. As to quaternary structure, homotrimer. Requires Mg(2+) as cofactor.

The protein localises to the cytoplasm. The enzyme catalyses alpha-D-glucosamine 1-phosphate + acetyl-CoA = N-acetyl-alpha-D-glucosamine 1-phosphate + CoA + H(+). It carries out the reaction N-acetyl-alpha-D-glucosamine 1-phosphate + UTP + H(+) = UDP-N-acetyl-alpha-D-glucosamine + diphosphate. It functions in the pathway nucleotide-sugar biosynthesis; UDP-N-acetyl-alpha-D-glucosamine biosynthesis; N-acetyl-alpha-D-glucosamine 1-phosphate from alpha-D-glucosamine 6-phosphate (route II): step 2/2. The protein operates within nucleotide-sugar biosynthesis; UDP-N-acetyl-alpha-D-glucosamine biosynthesis; UDP-N-acetyl-alpha-D-glucosamine from N-acetyl-alpha-D-glucosamine 1-phosphate: step 1/1. Its pathway is bacterial outer membrane biogenesis; LPS lipid A biosynthesis. Catalyzes the last two sequential reactions in the de novo biosynthetic pathway for UDP-N-acetylglucosamine (UDP-GlcNAc). The C-terminal domain catalyzes the transfer of acetyl group from acetyl coenzyme A to glucosamine-1-phosphate (GlcN-1-P) to produce N-acetylglucosamine-1-phosphate (GlcNAc-1-P), which is converted into UDP-GlcNAc by the transfer of uridine 5-monophosphate (from uridine 5-triphosphate), a reaction catalyzed by the N-terminal domain. The protein is Bifunctional protein GlmU of Azoarcus sp. (strain BH72).